The following is a 149-amino-acid chain: Large ribosomal subunit protein uL15 (149 aa).

Residues 1-64 are disordered; it reads MVELHDLQPH…GQTPLYMRIP (64 aa). Positions 31 to 40 are enriched in basic residues; it reads TAGRGHKGQK.

The protein belongs to the universal ribosomal protein uL15 family. In terms of assembly, part of the 50S ribosomal subunit.

In terms of biological role, binds to the 23S rRNA. The chain is Large ribosomal subunit protein uL15 from Aquifex aeolicus (strain VF5).